The chain runs to 365 residues: Synapse-associated protein 1 (365 aa).

The disordered stretch occupies residues 1–65 (MFGGLSSWLG…QPPTEDPQFL (65 aa)). The segment covering 52 to 62 (EQQQQPPTEDP) has biased composition (low complexity). The region spanning 172–224 (VQFNFDFDQMYPVALVMLQEDELLSKMRFALVPKLVKEEVFWRNYFYRISLIK) is the BSD domain. The disordered stretch occupies residues 237–259 (QASGKEEKSSNRDDNLPLTEAVR). Positions 240-251 (GKEEKSSNRDDN) are enriched in basic and acidic residues. Residue T262 is modified to Phosphothreonine. A phosphoserine mark is found at S283, S298, and S327. The interval 344-365 (VAESEKRDENWDKEIEKMLQES) is disordered. Residues 346 to 365 (ESEKRDENWDKEIEKMLQES) are compositionally biased toward basic and acidic residues.

Interacts (via phosphorylated form and BSD domain) with AKT1; this interaction is enhanced in a mTORC2-mediated manner in response to epidermal growth factor (EGF) stimulation and activates AKT1. In terms of processing, phosphorylated. Phosphorylation increases in a mTORC2-mediated manner in response to epidermal growth factor (EGF) stimulation. In terms of tissue distribution, expressed in the liver, kidney, skeletal muscle and in white and brown adipose tissues. Expressed in the cortex, cerebellum, thalamus, hippocampus, braistem, olfactory bulb, spinal cord and striatum of the brain. Expressed in most neuropil regions containing glutamatergic synaptic terminals. Expressed in the CA1, CA2 and CA3 perikarya of the hippocampus. Expressed in neurons and Purkinje cells (at the protein level).

The protein localises to the cytoplasm. The protein resides in the perinuclear region. Its subcellular location is the golgi apparatus. It localises to the perikaryon. It is found in the cell projection. The protein localises to the axon. The protein resides in the dendrite. Its subcellular location is the growth cone. It localises to the presynaptic cell membrane. It is found in the postsynaptic cell membrane. The protein localises to the membrane. In terms of biological role, plays a role in adipocyte differentiation by promoting mTORC2-mediated phosphorylation of AKT1 at 'Ser-473' after growth factor stimulation. The chain is Synapse-associated protein 1 from Mus musculus (Mouse).